Consider the following 67-residue polypeptide: MVTVIVQEGEPIEKVLKRFKARVEQEQILTELKRREYYEPPSERKKKRERNRRKKILKALKKQQQLI.

The protein belongs to the bacterial ribosomal protein bS21 family.

This is Small ribosomal subunit protein bS21 (rpsU) from Aquifex aeolicus (strain VF5).